The following is a 736-amino-acid chain: Zinc finger MYND domain-containing protein 15 (736 aa).

Disordered regions lie at residues 70–94 and 109–192; these read SLGQ…DEPP and LEDG…KNAE. Residues 110–123 show a composition bias toward acidic residues; sequence EDGEEGEEEEEDEE. Composition is skewed to basic and acidic residues over residues 124 to 135 and 165 to 185; these read HGERPGMEKVEP and ASRE…PEKR. Cysteine 307, cysteine 310, cysteine 322, cysteine 325, cysteine 331, cysteine 335, histidine 349, and cysteine 353 together coordinate Zn(2+). The MYND-type zinc-finger motif lies at 307-353; sequence CHVCHKHSFEVKLTPCPQCSAVLYCGEACLQADWRRCPDDVSHRFWC. Disordered stretches follow at residues 556-583 and 696-736; these read DGPE…GGRR and GGTV…RRRR. Over residues 704 to 718 the composition is skewed to pro residues; the sequence is GPAPRPPTPAAPPVP. Residues 719–736 show a composition bias toward basic residues; sequence ARRRRGEKKAARGPRRRR.

As to quaternary structure, interacts with HDAC1, HDAC3, HDAC6 and, to a lesser extent, with HDAC7. Testis-specific. Expressed in pachytene spermatocytes and all developing spermatids, but not in Sertoli, nor Leydig cells (at protein level).

The protein localises to the nucleus. The protein resides in the cytoplasm. In terms of biological role, acts as a transcriptional repressor through interaction with histone deacetylases (HDACs). May regulate haploid genes important for spermiogenesis. This Mus musculus (Mouse) protein is Zinc finger MYND domain-containing protein 15 (Zmynd15).